We begin with the raw amino-acid sequence, 393 residues long: Prokineticin receptor 1 (393 aa).

At 1–62 (METTVGTLGE…TNSRTFFAAK (62 aa)) the chain is on the extracellular side. N-linked (GlcNAc...) asparagine glycosylation occurs at asparagine 11. The helical transmembrane segment at 63–83 (IVIGMALVGIMLVCGIGNFIF) threads the bilayer. Over 84-98 (ITALARYKKLRNLTN) the chain is Cytoplasmic. Residues 99-119 (LLIANLAISDFLVAIVCCPFE) traverse the membrane as a helical segment. Residues 120–145 (MDYYVVRQLSWEHGHVLCASVNYLRT) lie on the Extracellular side of the membrane. Cysteine 137 and cysteine 217 are disulfide-bonded. The chain crosses the membrane as a helical span at residues 146–166 (VSLYVSTNALLAIAIDRYLAI). Topologically, residues 167–179 (VHPLRPRMKCQTA) are cytoplasmic. The helical transmembrane segment at 180-200 (AGLIFLVWSVSILIAIPAAYF) threads the bilayer. Residues 201–232 (TTETVLVIVESQEKIFCGQIWPVDQQFYYRSY) are Extracellular-facing. A helical transmembrane segment spans residues 233–253 (FLLVFGLEFVGPVIAMTLCYA). Over 254–282 (RVSRELWFKAVPGFQTEQIRRRLRCRRRT) the chain is Cytoplasmic. A helical membrane pass occupies residues 283-303 (VLGLVCVLSAYVLCWAPFYGF). The Extracellular segment spans residues 304 to 322 (TIVRDFFPSVFVKEKHYLT). Residues 323–343 (AFYVVECIAMSNSMINTLCFV) form a helical membrane-spanning segment. Residues 344–393 (TVRNNTSKYLKRILRLQWRASPSGSKASADLDLRTTGIPATEEVDCIRLK) lie on the Cytoplasmic side of the membrane.

The protein belongs to the G-protein coupled receptor 1 family. Widely expressed in peripheral tissues with the highest level in the spleen and moderate levels in the adipose tissues, thymus, lung, kidney, testis, uterus and small intestine.

Its subcellular location is the cell membrane. Functionally, receptor for prokineticin 1. Exclusively coupled to the G(q) subclass of heteromeric G proteins. Activation leads to mobilization of calcium, stimulation of phosphoinositide turnover and activation of p44/p42 mitogen-activated protein kinase. May play a role during early pregnancy. The protein is Prokineticin receptor 1 (Prokr1) of Rattus norvegicus (Rat).